A 294-amino-acid chain; its full sequence is Sarcotoxin-2A (294 aa).

The first 22 residues, M1 to A22, serve as a signal peptide directing secretion. A propeptide spans Y23–P24 (removed by a dipeptidylpeptidase). Q25 carries the post-translational modification Pyrrolidone carboxylic acid. At R293 the chain carries Arginine amide.

The protein belongs to the attacin/sarcotoxin-2 family. Synthesized by the fat body and is eventually secreted into the hemolymph.

It localises to the secreted. Sarcotoxin II is an antibacterial protein which plays a role in the inflammatory response of this insect. The main effect of sarcotoxin II on E.coli may be the inhibition of cell wall synthesis, including septum formation. The sequence is that of Sarcotoxin-2A from Sarcophaga peregrina (Flesh fly).